We begin with the raw amino-acid sequence, 270 residues long: Phosphonoacetaldehyde hydrolase (270 aa).

The active-site Nucleophile is the Asp11. Mg(2+)-binding residues include Asp11 and Ala13. Residue Lys53 is the Schiff-base intermediate with substrate of the active site. Mg(2+) is bound at residue Asp187.

It belongs to the HAD-like hydrolase superfamily. PhnX family. In terms of assembly, homodimer. Mg(2+) serves as cofactor.

It carries out the reaction phosphonoacetaldehyde + H2O = acetaldehyde + phosphate + H(+). In terms of biological role, involved in phosphonate degradation. This Salmonella choleraesuis (strain SC-B67) protein is Phosphonoacetaldehyde hydrolase.